An 853-amino-acid polypeptide reads, in one-letter code: Neural cell adhesion molecule 1 (853 aa).

The first 19 residues, 1-19, serve as a signal peptide directing secretion; that stretch reads MLQTKNLIWTLFFLGTAVS. Ig-like C2-type domains follow at residues 20–111, 116–205, 212–300, 307–412, and 415–500; these read LQVD…ATVN, QKLM…KDIQ, PTVQ…ASIH, PKIT…LEVQ, and PKLQ…ESLE. The Extracellular segment spans residues 20 to 719; that stretch reads LQVDIVPSQG…NGSPTSGLST (700 aa). 2 cysteine pairs are disulfide-bonded: cysteine 41-cysteine 96 and cysteine 139-cysteine 189. Residues 152 to 156 and 161 to 165 contribute to the heparin site; these read KHKGR and KKDVR. The N-linked (GlcNAc...) asparagine glycan is linked to asparagine 222. Cysteine 235 and cysteine 286 are disulfide-bonded. N-linked (GlcNAc...) asparagine glycans are attached at residues asparagine 314, asparagine 346, asparagine 432, asparagine 458, and asparagine 487. Cysteine 328 and cysteine 394 are joined by a disulfide. A disulfide bridge links cysteine 435 with cysteine 488. Fibronectin type-III domains follow at residues 508–607 and 609–704; these read TPSS…TQPV and EPSA…SAQP. Residues 720 to 737 form a helical membrane-spanning segment; the sequence is GAIVGILVVTFVLLLVAV. The Cytoplasmic segment spans residues 738-853; it reads DVTCYFLNKC…TQIKVNESKA (116 aa). The interval 764–853 is disordered; it reads GAKGKDMEEG…TQIKVNESKA (90 aa). Composition is skewed to basic and acidic residues over residues 766 to 807 and 815 to 829; these read KGKD…HTEP and EPEKGPVEAKPETET. Serine 778 and serine 782 each carry phosphoserine. Residues 838 to 853 show a composition bias toward polar residues; the sequence is TVPNDATQIKVNESKA.

As to quaternary structure, interacts with MDK. Found in a complex with SLC39A6, SLC39A10 and with NCAM1; this complex controls NCAM1 phosphorylation and integration into focal adhesion complexes during epithelial-tomesenchymal transition. Interacts with synaptic plasticity regulator PANTS. Post-translationally, polysialylated by ST8SIA2 and ST8SIA4. Polysialylation modulates cell interactions by confering both attractive and repulsive properties that are highly regulated by ST8SIA2 and ST8SIA4. Polysialylation is formed on a-2,3-linked sialic acid of core glycans.

It localises to the cell membrane. Functionally, this protein is a cell adhesion molecule involved in neuron-neuron adhesion, neurite fasciculation, outgrowth of neurites, etc. The sequence is that of Neural cell adhesion molecule 1 from Bos taurus (Bovine).